The chain runs to 377 residues: Glutamate 5-kinase (377 aa).

Residue lysine 22 participates in ATP binding. Serine 62, aspartate 149, and asparagine 161 together coordinate substrate. Residues 181 to 182 (TD) and 223 to 229 (TGGMVTK) contribute to the ATP site. Residues 285 to 363 (RGTIVVDAGA…AQLKRFLGPQ (79 aa)) enclose the PUA domain.

The protein belongs to the glutamate 5-kinase family.

The protein localises to the cytoplasm. It carries out the reaction L-glutamate + ATP = L-glutamyl 5-phosphate + ADP. It participates in amino-acid biosynthesis; L-proline biosynthesis; L-glutamate 5-semialdehyde from L-glutamate: step 1/2. Functionally, catalyzes the transfer of a phosphate group to glutamate to form L-glutamate 5-phosphate. The chain is Glutamate 5-kinase from Bifidobacterium longum (strain DJO10A).